A 1977-amino-acid polypeptide reads, in one-letter code: Echinoderm microtubule-associated protein-like 5 (1977 aa).

WD repeat units lie at residues 59–100 (GHSD…TVSV), 104–145 (VHTH…MLSM), 148–187 (GHTD…LTPK), 195–233 (GDLQ…RTIQ), 235–273 (AHTA…TVID), 280–321 (GYKG…LIMQ), 323–362 (HCEG…LIAR), 364–403 (NMDE…EVVH), 406–445 (DRKE…KKVG), 449–488 (GSLS…EVTS), and 561–601 (GHSA…KLKD). Residues 609 to 629 (ESLTESNSDESDSDLSDVPEL) are disordered. A compositionally biased stretch (acidic residues) spans 615-629 (NSDESDSDLSDVPEL). 9 WD repeats span residues 725–766 (GHDD…PLSI), 770–811 (YHQY…KLSV), 814–853 (GSKD…LIGR), 861–900 (GKND…KTVK), 901–940 (AHDG…KTYA), 996–1035 (HMEG…CMLA), 1038–1077 (KLKK…DLVS), 1080–1120 (HRKD…RVGV), and 1236–1276 (AHST…HREK). Disordered stretches follow at residues 1274–1299 (REKK…SDVT) and 1323–1363 (PHLQ…NVGK). The span at 1281–1294 (SEESDTDSEEDGGY) shows a compositional bias: acidic residues. The span at 1326 to 1337 (QQKEPSVDERQG) shows a compositional bias: basic and acidic residues. WD repeat units follow at residues 1420-1471 (EHND…TLSI), 1475-1516 (SHSK…KIAS), 1519-1558 (GHNQ…LLSK), 1568-1606 (ARMQ…RVVA), 1608-1654 (AHNG…RAFR), 1699-1739 (GHVD…MLNK), 1741-1782 (NLGH…GKKR), 1783-1822 (DRRC…TLNR), 1895-1934 (AEKA…KFAK), and 1940-1977 (GHSP…HTPH).

Belongs to the WD repeat EMAP family. As to expression, highly expressed in brain, especially in hippocampus, cerebellum and olfactory bulb (at protein level).

It is found in the cytoplasm. The protein localises to the cytoskeleton. Its function is as follows. May modify the assembly dynamics of microtubules, such that microtubules are slightly longer, but more dynamic. The protein is Echinoderm microtubule-associated protein-like 5 (Eml5) of Rattus norvegicus (Rat).